Here is a 438-residue protein sequence, read N- to C-terminus: Adenosylhomocysteinase (438 aa).

3 residues coordinate substrate: threonine 64, aspartate 139, and glutamate 164. 165–167 (TTT) lines the NAD(+) pocket. Lysine 194 and aspartate 198 together coordinate substrate. Residues asparagine 199, 228-233 (GYGDVG), glutamate 251, asparagine 286, 307-309 (IGH), and asparagine 352 contribute to the NAD(+) site.

It belongs to the adenosylhomocysteinase family. Requires NAD(+) as cofactor.

It is found in the cytoplasm. The catalysed reaction is S-adenosyl-L-homocysteine + H2O = L-homocysteine + adenosine. It participates in amino-acid biosynthesis; L-homocysteine biosynthesis; L-homocysteine from S-adenosyl-L-homocysteine: step 1/1. Functionally, may play a key role in the regulation of the intracellular concentration of adenosylhomocysteine. The sequence is that of Adenosylhomocysteinase from Coxiella burnetii (strain CbuK_Q154) (Coxiella burnetii (strain Q154)).